A 363-amino-acid chain; its full sequence is Protein U2 (363 aa).

Positions 1 to 18 are cleaved as a signal peptide; that stretch reads MFCRSPFLGISSWSLASA.

The chain is Protein U2 (U2) from Homo sapiens (Human).